The primary structure comprises 244 residues: tRNA (guanine-N(1)-)-methyltransferase (244 aa).

S-adenosyl-L-methionine is bound by residues G120 and 140 to 145; that span reads IGDYIL.

This sequence belongs to the RNA methyltransferase TrmD family. Homodimer.

It is found in the cytoplasm. The enzyme catalyses guanosine(37) in tRNA + S-adenosyl-L-methionine = N(1)-methylguanosine(37) in tRNA + S-adenosyl-L-homocysteine + H(+). Functionally, specifically methylates guanosine-37 in various tRNAs. In Brucella abortus (strain S19), this protein is tRNA (guanine-N(1)-)-methyltransferase.